A 1030-amino-acid polypeptide reads, in one-letter code: MAFTNYSSLNRAQLTFEYLHTNSTTHEFLFGALAELVDNARDADATRIDIYAERREDLRGGFMLCFLDDGAGMDPSDAASVIQFGKSAKRTPESTQIGQYGNGLKSGSMRIGKDFILFTKKEDTMTCLFLSRTFHEEEGIDEVIVPLPTWNARTREPITDNVEKFAIETELVYKYSPFHTEEQVMNQFMKIPGNSGTLVIIFNLKLMDNGEPELDIISNPKDIQMAETSPEGTKPERRSFRAYAAVLYIDPRMRIFIHGHKVQTKRLSCCLYKPRMYKYTSSRFKTRAEQEVKKAEHVARIAEEKAREAESKARTLEVRMGGDLTRDSRVMLRQVQNTAITLRREADVKKRIKDAKQRALKEPKELNFVFGVNIEHRDLDGMFIYNCSRLIKMYEKVGPQLEGGMACGGVVGVVDVPYLVLEPTHNKQDFADAKEYRHLLRAMGEHLAQYWKDIAIAQRGIIKFWDEFGYLSANWNQPPSSELRFKRRRAMEIPTTIQCDLCLKWRTLPFQLSSVETDYPDTWVCSMNPDPEQDRCEASEQKQKVPLGTLKKDPKTQEEKQKQLTEKIRQQQEKLEALQKTTPIRSQADLKKLPLEVTTRPIEEPVRRPQRPRSPPLPAVIKNAPSRPPSIQTPRPSTQLRKTSVISLPKPPTTAARGETSTSRLLQPTEAPRKPANPPIKTVPRPTPPVHTPPLSLIPSSKSLREVPAQKAIKTPVVKKPEPPVKQSVATSGRKRSLAVSDEEEAEEEAEKRRERCKRGKLAVKEEKKEANELSDSAGEDHPAELRKAQKDKGLHVEVRVNREWYTGRVTAVEVGKNAVRWKVKFDYVPTDTTPRDRWVEKGSEDVRLMKPPSPEHQSPDTQQEGGEEEEAMVARQAVALPEPSTSDGLPIEPDTTATSPSHETIDLLVQILRNCLRYFLPPSFPISKKELSVMNSEELISFPLKEYFKQYEVGLQNLCHSYQSRADSRAKASEESLRTSEKKLRETEEKLQKLRTNIVALLQKVQEDIDINTDDELDAYIEDLITKGD.

Residue Ala-2 is modified to N-acetylalanine. Residues Asn-39, 87 to 89 (SAK), and 99 to 105 (QYGNGLK) each bind ATP. A Mg(2+)-binding site is contributed by Asn-39. The stretch at 285-362 (KTRAEQEVKK…KDAKQRALKE (78 aa)) forms a coiled coil. Lys-427 provides a ligand contact to ATP. The CW-type zinc finger occupies 490 to 544 (AMEIPTTIQCDLCLKWRTLPFQLSSVETDYPDTWVCSMNPDPEQDRCEASEQKQK). Cys-499, Cys-502, Cys-525, and Cys-536 together coordinate Zn(2+). The segment at 530-791 (DPEQDRCEAS…HPAELRKAQK (262 aa)) is disordered. Composition is skewed to basic and acidic residues over residues 532–543 (EQDRCEASEQKQ) and 550–577 (LKKD…KLEA). A coiled-coil region spans residues 555–583 (KTQEEKQKQLTEKIRQQQEKLEALQKTTP). Thr-582 is modified (phosphothreonine). At Ser-614 the chain carries Phosphoserine. Polar residues predominate over residues 629 to 646 (PSIQTPRPSTQLRKTSVI). Residues Lys-650 and Lys-702 each participate in a glycyl lysine isopeptide (Lys-Gly) (interchain with G-Cter in SUMO2) cross-link. Residues 693 to 702 (PPLSLIPSSK) are compositionally biased toward low complexity. The residue at position 703 (Ser-703) is a Phosphoserine. Lys-714 participates in a covalent cross-link: Glycyl lysine isopeptide (Lys-Gly) (interchain with G-Cter in SUMO2). Residue Ser-728 is modified to Phosphoserine. Position 731 is a phosphothreonine (Thr-731). Phosphoserine is present on residues Ser-737 and Ser-741. The stretch at 738–775 (LAVSDEEEAEEEAEKRRERCKRGKLAVKEEKKEANELS) forms a coiled coil. Positions 763–772 (AVKEEKKEAN) are enriched in basic and acidic residues. A Glycyl lysine isopeptide (Lys-Gly) (interchain with G-Cter in SUMO2) cross-link involves residue Lys-765. Residues Ser-775 and Ser-777 each carry the phosphoserine modification. Residues 779-791 (GEDHPAELRKAQK) show a composition bias toward basic and acidic residues. A Glycyl lysine isopeptide (Lys-Gly) (interchain with G-Cter in SUMO2) cross-link involves residue Lys-817. A Phosphothreonine modification is found at Thr-834. Over residues 837 to 849 (DRWVEKGSEDVRL) the composition is skewed to basic and acidic residues. Disordered stretches follow at residues 837–874 (DRWV…EAMV) and 882–901 (PEPS…ATSP). Residues Ser-854 and Ser-859 each carry the phosphoserine modification. The span at 856 to 865 (EHQSPDTQQE) shows a compositional bias: polar residues. Lys-930 participates in a covalent cross-link: Glycyl lysine isopeptide (Lys-Gly) (interchain with G-Cter in SUMO2). Positions 966 to 1011 (RADSRAKASEESLRTSEKKLRETEEKLQKLRTNIVALLQKVQEDID) form a coiled coil.

In terms of assembly, homodimerizes upon ATP-binding and dissociate upon ATP hydrolysis; homodimerization is required for gene silencing. Binds histone H3 independently of the methylation status at 'Lys-9'. Interacts with HDAC4. Interacts with FAM208A/TASOR and MPHOSPH8; the interactions associate MORC2 with the HUSH complex which recruits MORC2 to heterochromatic loci. Interacts with Morc2b. Phosphorylated by PAK1 at Ser-737 upon DNA damage. Phosphorylation is required for ATPase activity and recruitment to damaged chromatin. In terms of tissue distribution, expressed in the axons and Schwann cells of peripheral nerves. Expressed in testes.

It is found in the nucleus. The protein localises to the cytoplasm. The protein resides in the cytosol. Its subcellular location is the chromosome. It localises to the nucleus matrix. It carries out the reaction ATP + H2O = ADP + phosphate + H(+). ATPase activity is dependent of phosphorylation by PAK1 and presence of DNA. In terms of biological role, essential for epigenetic silencing by the HUSH complex. Recruited by HUSH to target site in heterochromatin, the ATPase activity and homodimerization are critical for HUSH-mediated silencing. Represses germ cell-related genes and L1 retrotransposons in collaboration with SETDB1 and the HUSH complex, the silencing is dependent of repressive epigenetic modifications, such as H3K9me3 mark. Silencing events often occur within introns of transcriptionally active genes, and lead to the down-regulation of host gene expression. During DNA damage response, regulates chromatin remodeling through ATP hydrolysis. During DNA damage response, may regulate chromatin remodeling through ATP hydrolysis. The protein is ATPase MORC2A of Mus musculus (Mouse).